The following is a 53-amino-acid chain: Light-harvesting protein B-800/850 alpha chain (53 aa).

The Cytoplasmic portion of the chain corresponds to 1–14 (MNQGKIWTVVNPSV). A helical transmembrane segment spans residues 15–35 (GLPLLLGSVTVIAILVHAAVL). A bacteriochlorophyll is bound at residue histidine 31. The Periplasmic portion of the chain corresponds to 36–53 (SHTTWFPAYWQGGLKKAA).

This sequence belongs to the antenna complex alpha subunit family. As to quaternary structure, the core complex is formed by different alpha and beta chains, binding bacteriochlorophyll molecules, and arranged most probably in tetrameric structures disposed around the reaction center. The non-pigmented gamma chains may constitute additional components.

It localises to the cell inner membrane. Functionally, antenna complexes are light-harvesting systems, which transfer the excitation energy to the reaction centers. In Rhodoblastus acidophilus (Rhodopseudomonas acidophila), this protein is Light-harvesting protein B-800/850 alpha chain.